The chain runs to 532 residues: Glucose-6-phosphate isomerase (532 aa).

Glu-322 acts as the Proton donor in catalysis. Residues His-351 and Lys-457 contribute to the active site.

It belongs to the GPI family.

Its subcellular location is the cytoplasm. It catalyses the reaction alpha-D-glucose 6-phosphate = beta-D-fructose 6-phosphate. It participates in carbohydrate biosynthesis; gluconeogenesis. It functions in the pathway carbohydrate degradation; glycolysis; D-glyceraldehyde 3-phosphate and glycerone phosphate from D-glucose: step 2/4. Functionally, catalyzes the reversible isomerization of glucose-6-phosphate to fructose-6-phosphate. The protein is Glucose-6-phosphate isomerase of Synechococcus sp. (strain JA-2-3B'a(2-13)) (Cyanobacteria bacterium Yellowstone B-Prime).